We begin with the raw amino-acid sequence, 191 residues long: Ion-translocating oxidoreductase complex subunit B (191 aa).

The segment at 1 to 26 is hydrophobic; that stretch reads MSAIWIAIAVLSALSLVFGGLLGYAS. A 4Fe-4S domain is found at 32–91; it reads EEDPIVEQIDAILPQSQCGQCGYPGCRPYADAVGNNGEMINKCAPGGEQTMLKLAALLNV. 12 residues coordinate [4Fe-4S] cluster: C49, C52, C57, C74, C116, C119, C122, C126, C146, C149, C152, and C156. 4Fe-4S ferredoxin-type domains are found at residues 107-136 and 137-166; these read KVAW…GATR and AMHT…MRPV.

This sequence belongs to the 4Fe4S bacterial-type ferredoxin family. RnfB subfamily. As to quaternary structure, the complex is composed of six subunits: RnfA, RnfB, RnfC, RnfD, RnfE and RnfG. It depends on [4Fe-4S] cluster as a cofactor.

The protein resides in the cell inner membrane. Its function is as follows. Part of a membrane-bound complex that couples electron transfer with translocation of ions across the membrane. This is Ion-translocating oxidoreductase complex subunit B from Erwinia tasmaniensis (strain DSM 17950 / CFBP 7177 / CIP 109463 / NCPPB 4357 / Et1/99).